We begin with the raw amino-acid sequence, 390 residues long: Probable L-tyrosine/L-aspartate decarboxylase (390 aa).

Position 239 is an N6-(pyridoxal phosphate)lysine (Lys239).

This sequence belongs to the group II decarboxylase family. MfnA subfamily. It depends on pyridoxal 5'-phosphate as a cofactor.

The enzyme catalyses L-tyrosine + H(+) = tyramine + CO2. The catalysed reaction is L-aspartate + H(+) = beta-alanine + CO2. The protein operates within cofactor biosynthesis; methanofuran biosynthesis. It functions in the pathway cofactor biosynthesis; coenzyme A biosynthesis. Functionally, catalyzes the decarboxylation of L-tyrosine to produce tyramine for methanofuran biosynthesis. Can also catalyze the decarboxylation of L-aspartate to produce beta-alanine for coenzyme A (CoA) biosynthesis. The sequence is that of Probable L-tyrosine/L-aspartate decarboxylase from Methanococcus aeolicus (strain ATCC BAA-1280 / DSM 17508 / OCM 812 / Nankai-3).